Consider the following 353-residue polypeptide: Photosystem II protein D1 (353 aa).

An N-acetylthreonine modification is found at Thr-2. Thr-2 bears the Phosphothreonine mark. Transmembrane regions (helical) follow at residues 29–46, 118–133, and 142–156; these read YIGWFGVLMIPTLLTATS, HFLLGVACYMGREWEL, and WIAVAYSAPVAAATA. Position 118 (His-118) interacts with chlorophyll a. Tyr-126 contacts pheophytin a. The [CaMn4O5] cluster site is built by Asp-170 and Glu-189. The chain crosses the membrane as a helical span at residues 197–218; that stretch reads FHMLGVAGVFGGSLFSAMHGSL. His-198 lines the chlorophyll a pocket. A quinone is bound by residues His-215 and 264–265; that span reads SF. Position 215 (His-215) interacts with Fe cation. A Fe cation-binding site is contributed by His-272. A helical membrane pass occupies residues 274 to 288; sequence FLAAWPVVGIWFTAL. [CaMn4O5] cluster contacts are provided by His-332, Glu-333, Asp-342, and Ala-344. A propeptide spanning residues 345–353 is cleaved from the precursor; that stretch reads AVEAPSING.

The protein belongs to the reaction center PufL/M/PsbA/D family. As to quaternary structure, PSII is composed of 1 copy each of membrane proteins PsbA, PsbB, PsbC, PsbD, PsbE, PsbF, PsbH, PsbI, PsbJ, PsbK, PsbL, PsbM, PsbT, PsbX, PsbY, PsbZ, Psb30/Ycf12, at least 3 peripheral proteins of the oxygen-evolving complex and a large number of cofactors. It forms dimeric complexes. It depends on The D1/D2 heterodimer binds P680, chlorophylls that are the primary electron donor of PSII, and subsequent electron acceptors. It shares a non-heme iron and each subunit binds pheophytin, quinone, additional chlorophylls, carotenoids and lipids. D1 provides most of the ligands for the Mn4-Ca-O5 cluster of the oxygen-evolving complex (OEC). There is also a Cl(-1) ion associated with D1 and D2, which is required for oxygen evolution. The PSII complex binds additional chlorophylls, carotenoids and specific lipids. as a cofactor. Tyr-161 forms a radical intermediate that is referred to as redox-active TyrZ, YZ or Y-Z. Post-translationally, C-terminally processed by CTPA; processing is essential to allow assembly of the oxygen-evolving complex and thus photosynthetic growth.

It localises to the plastid. Its subcellular location is the chloroplast thylakoid membrane. The enzyme catalyses 2 a plastoquinone + 4 hnu + 2 H2O = 2 a plastoquinol + O2. Its function is as follows. Photosystem II (PSII) is a light-driven water:plastoquinone oxidoreductase that uses light energy to abstract electrons from H(2)O, generating O(2) and a proton gradient subsequently used for ATP formation. It consists of a core antenna complex that captures photons, and an electron transfer chain that converts photonic excitation into a charge separation. The D1/D2 (PsbA/PsbD) reaction center heterodimer binds P680, the primary electron donor of PSII as well as several subsequent electron acceptors. The protein is Photosystem II protein D1 of Illicium oligandrum (Star anise).